A 340-amino-acid chain; its full sequence is HTH-type transcriptional regulator CelR (340 aa).

The HTH lacI-type domain maps to 1-61 (MERRRRPTLE…PNRAARTLVT (61 aa)). The H-T-H motif DNA-binding region spans 9-28 (LEMVAALAGVGRGTVSRVIN).

Its subcellular location is the cytoplasm. With respect to regulation, activity is controlled by cytoplasmic cellobiose levels. Binding of CelR to the celE promoter is inhibited specifically by low concentrations of cellobiose, the major end product of cellulases. Activity may also be regulated through post-translational modification. Its function is as follows. Transcriptional regulator that regulates the expression of all six cellulases, encoded by the cel genes (designated celA through celF). Acts as a repressor. Specifically binds to a 14-bp inverted repeat site, which is present in the upstream region of the cellulase genes. The protein is HTH-type transcriptional regulator CelR of Thermobifida fusca (Thermomonospora fusca).